The sequence spans 275 residues: Ribosomal RNA small subunit methyltransferase A (275 aa).

S-adenosyl-L-methionine-binding residues include N21, L23, G48, E69, D94, and N115.

The protein belongs to the class I-like SAM-binding methyltransferase superfamily. rRNA adenine N(6)-methyltransferase family. RsmA subfamily.

It is found in the cytoplasm. The enzyme catalyses adenosine(1518)/adenosine(1519) in 16S rRNA + 4 S-adenosyl-L-methionine = N(6)-dimethyladenosine(1518)/N(6)-dimethyladenosine(1519) in 16S rRNA + 4 S-adenosyl-L-homocysteine + 4 H(+). Its function is as follows. Specifically dimethylates two adjacent adenosines (A1518 and A1519) in the loop of a conserved hairpin near the 3'-end of 16S rRNA in the 30S particle. May play a critical role in biogenesis of 30S subunits. The protein is Ribosomal RNA small subunit methyltransferase A of Clostridium botulinum (strain ATCC 19397 / Type A).